Here is a 75-residue protein sequence, read N- to C-terminus: DNA-directed RNA polymerase subunit omega (75 aa).

It belongs to the RNA polymerase subunit omega family. In terms of assembly, in cyanobacteria the RNAP catalytic core is composed of 2 alpha, 1 beta, 1 beta', 1 gamma and 1 omega subunit. When a sigma factor is associated with the core the holoenzyme is formed, which can initiate transcription.

The catalysed reaction is RNA(n) + a ribonucleoside 5'-triphosphate = RNA(n+1) + diphosphate. In terms of biological role, promotes RNA polymerase assembly. Latches the N- and C-terminal regions of the beta' subunit thereby facilitating its interaction with the beta and alpha subunits. The protein is DNA-directed RNA polymerase subunit omega of Prochlorococcus marinus (strain MIT 9211).